The chain runs to 263 residues: Acetylglutamate kinase (263 aa).

Residues Gly48 to Gly49, Arg70, and Asn162 contribute to the substrate site.

It belongs to the acetylglutamate kinase family. ArgB subfamily.

It is found in the cytoplasm. It carries out the reaction N-acetyl-L-glutamate + ATP = N-acetyl-L-glutamyl 5-phosphate + ADP. The protein operates within amino-acid biosynthesis; L-arginine biosynthesis; N(2)-acetyl-L-ornithine from L-glutamate: step 2/4. Functionally, catalyzes the ATP-dependent phosphorylation of N-acetyl-L-glutamate. The polypeptide is Acetylglutamate kinase (Vibrio parahaemolyticus serotype O3:K6 (strain RIMD 2210633)).